The chain runs to 77 residues: Integrin beta-2 (77 aa).

C36 and C43 are joined by a disulfide. An N-linked (GlcNAc...) asparagine glycan is attached at N54.

Belongs to the integrin beta chain family. Dimer of an alpha and beta subunit.

Its subcellular location is the membrane. In terms of biological role, integrins are a large family of cell surface glycoproteins that mediate cell to cell and cell to matrix adhesion. This is Integrin beta-2 (itgb2) from Xenopus laevis (African clawed frog).